The sequence spans 217 residues: Uracil-DNA glycosylase (217 aa).

Aspartate 62 serves as the catalytic Proton acceptor.

Belongs to the uracil-DNA glycosylase (UDG) superfamily. UNG family.

Its subcellular location is the cytoplasm. It catalyses the reaction Hydrolyzes single-stranded DNA or mismatched double-stranded DNA and polynucleotides, releasing free uracil.. Excises uracil residues from the DNA which can arise as a result of misincorporation of dUMP residues by DNA polymerase or due to deamination of cytosine. The chain is Uracil-DNA glycosylase from Streptococcus uberis (strain ATCC BAA-854 / 0140J).